The primary structure comprises 240 residues: Orotidine 5'-phosphate decarboxylase (240 aa).

Residues Asp-16, Lys-37, 64–73 (DLKFHDIPTT), Thr-128, Arg-190, Gln-199, Gly-219, and Arg-220 contribute to the substrate site. Lys-66 acts as the Proton donor in catalysis.

It belongs to the OMP decarboxylase family. Type 1 subfamily. In terms of assembly, homodimer.

It carries out the reaction orotidine 5'-phosphate + H(+) = UMP + CO2. Its pathway is pyrimidine metabolism; UMP biosynthesis via de novo pathway; UMP from orotate: step 2/2. Catalyzes the decarboxylation of orotidine 5'-monophosphate (OMP) to uridine 5'-monophosphate (UMP). The protein is Orotidine 5'-phosphate decarboxylase of Prochlorococcus marinus (strain SARG / CCMP1375 / SS120).